Reading from the N-terminus, the 259-residue chain is Ribonuclease HII (259 aa).

The region spanning 70 to 258 is the RNase H type-2 domain; it reads TLIVGIDEVG…VKSLVLGKKE (189 aa). Residues Asp-76, Glu-77, and Asp-168 each contribute to the a divalent metal cation site.

The protein belongs to the RNase HII family. Requires Mn(2+) as cofactor. It depends on Mg(2+) as a cofactor.

Its subcellular location is the cytoplasm. It catalyses the reaction Endonucleolytic cleavage to 5'-phosphomonoester.. In terms of biological role, endonuclease that specifically degrades the RNA of RNA-DNA hybrids. The polypeptide is Ribonuclease HII (Streptococcus pneumoniae (strain ATCC 700669 / Spain 23F-1)).